The following is a 203-amino-acid chain: MPGPLTCTPAWQGQGRAAAFLCCSFQRAGAVVGVPARWHRGRLSSQQRLRSSLGGSHPCPQLGRRLVREGVISVPRQQGRRRCRESFSPADVAPGPICSANICLSGVRFLTCLNRVREHVVGPSPSPAAPICFFPVVEALCTLRGRRCHCLPFPKRGMQRWMLPLRRGARLLPLASSKNPRARSPGLDPLGSSETLWSHRGGH.

A disordered region spans residues L174 to H203.

This is an uncharacterized protein from Homo sapiens (Human).